Consider the following 245-residue polypeptide: Probable phosphatase Spro_1934 (245 aa).

Residues His7, His9, His15, His40, Glu73, His101, His131, Asp192, and His194 each coordinate Zn(2+).

The protein belongs to the PHP family. As to quaternary structure, homotrimer. Zn(2+) serves as cofactor.

In Serratia proteamaculans (strain 568), this protein is Probable phosphatase Spro_1934.